Reading from the N-terminus, the 151-residue chain is Cell division protein SepF (151 aa).

The protein belongs to the SepF family. In terms of assembly, homodimer. Interacts with FtsZ.

The protein localises to the cytoplasm. Cell division protein that is part of the divisome complex and is recruited early to the Z-ring. Probably stimulates Z-ring formation, perhaps through the cross-linking of FtsZ protofilaments. Its function overlaps with FtsA. This is Cell division protein SepF from Desulfitobacterium hafniense (strain Y51).